We begin with the raw amino-acid sequence, 31 residues long: Hemocyanin subunit 2 (31 aa).

Belongs to the tyrosinase family. Hemocyanin subfamily. As to expression, hemolymph.

The protein localises to the secreted. The protein resides in the extracellular space. Its function is as follows. Hemocyanins are copper-containing oxygen carriers occurring freely dissolved in the hemolymph of many mollusks and arthropods. This chain is Hemocyanin subunit 2, found in Maja squinado (Mediterranean spider crab).